A 231-amino-acid chain; its full sequence is AA9 family lytic polysaccharide monooxygenase F (231 aa).

The first 17 residues, Met1–Ala17, serve as a signal peptide directing secretion. His18, Asp50, and His89 together coordinate Cu(2+). Asp50 contacts O2. Intrachain disulfides connect Cys59/Cys177 and Cys147/Cys231. O2-binding residues include His163 and Gln172. Tyr174 is a binding site for Cu(2+).

The protein belongs to the polysaccharide monooxygenase AA9 family. The cofactor is Cu(2+).

It localises to the secreted. It carries out the reaction [(1-&gt;4)-beta-D-glucosyl]n+m + reduced acceptor + O2 = 4-dehydro-beta-D-glucosyl-[(1-&gt;4)-beta-D-glucosyl]n-1 + [(1-&gt;4)-beta-D-glucosyl]m + acceptor + H2O.. Functionally, lytic polysaccharide monooxygenase (LPMO) that depolymerizes crystalline and amorphous polysaccharides via the oxidation of scissile alpha- or beta-(1-4)-glycosidic bonds, yielding C1 oxidation products. Catalysis by LPMOs requires the reduction of the active-site copper from Cu(II) to Cu(I) by a reducing agent and H(2)O(2) or O(2) as a cosubstrate. The polypeptide is AA9 family lytic polysaccharide monooxygenase F (gh61-6) (Neurospora crassa (strain ATCC 24698 / 74-OR23-1A / CBS 708.71 / DSM 1257 / FGSC 987)).